Reading from the N-terminus, the 207-residue chain is Serotonin N-acetyltransferase (207 aa).

Threonine 31 carries the post-translational modification Phosphothreonine; by PKA. The 160-residue stretch at 35-194 (SEFRCLTPQD…SLTFMELQCS (160 aa)) folds into the N-acetyltransferase domain. Residue leucine 124 coordinates substrate. Acetyl-CoA contacts are provided by residues 124-126 (LAV) and 132-137 (QQGKGS). Residue methionine 159 participates in substrate binding. 168 to 170 (YEK) is an acetyl-CoA binding site. At serine 205 the chain carries Phosphoserine.

Belongs to the acetyltransferase family. AANAT subfamily. In terms of assembly, monomer. Interacts with several 14-3-3 proteins, including YWHAB, YWHAE, YWHAG and YWHAZ, preferentially when phosphorylated at Thr-31. Phosphorylation on Ser-205 also allows binding to YWHAZ, but with lower affinity. The interaction with YWHAZ considerably increases affinity for arylalkylamines and acetyl-CoA and protects the enzyme from dephosphorylation and proteasomal degradation. It may also prevent thiol-dependent inactivation. Post-translationally, cAMP-dependent phosphorylation on both N-terminal Thr-31 and C-terminal Ser-205 regulates AANAT activity by promoting interaction with 14-3-3 proteins. As to expression, highly expressed in pineal gland and retina. Also detected in heart and intestine.

The protein localises to the cytoplasm. The enzyme catalyses a 2-arylethylamine + acetyl-CoA = an N-acetyl-2-arylethylamine + CoA + H(+). It functions in the pathway aromatic compound metabolism; melatonin biosynthesis; melatonin from serotonin: step 1/2. Its function is as follows. Controls the night/day rhythm of melatonin production in the pineal gland. Catalyzes the N-acetylation of serotonin into N-acetylserotonin, the penultimate step in the synthesis of melatonin. This Mesocricetus auratus (Golden hamster) protein is Serotonin N-acetyltransferase (AANAT).